The following is a 256-amino-acid chain: Hemin import ATP-binding protein HmuV (256 aa).

One can recognise an ABC transporter domain in the interval 2-239; the sequence is IHAFAVSVIR…ANVREVYQVD (238 aa). Residue 34–41 coordinates ATP; the sequence is GPNGAGKS.

Belongs to the ABC transporter superfamily. Heme (hemin) importer (TC 3.A.1.14.5) family. The complex is composed of two ATP-binding proteins (HmuV), two transmembrane proteins (HmuU) and a solute-binding protein (HmuT).

It localises to the cell inner membrane. Functionally, part of the ABC transporter complex HmuTUV involved in hemin import. Responsible for energy coupling to the transport system. In Hahella chejuensis (strain KCTC 2396), this protein is Hemin import ATP-binding protein HmuV.